Consider the following 512-residue polypeptide: Pantothenate transporter FEN2 (512 aa).

Topologically, residues methionine 1–arginine 27 are cytoplasmic. The chain crosses the membrane as a helical span at residues leucine 28 to asparagine 48. At tyrosine 49–threonine 79 the chain is on the extracellular side. Residues valine 80–proline 100 form a helical membrane-spanning segment. The Cytoplasmic segment spans residues proline 101–arginine 102. The chain crosses the membrane as a helical span at residues isoleucine 103–threonine 123. At serine 124–arginine 132 the chain is on the extracellular side. A helical transmembrane segment spans residues phenylalanine 133–tryptophan 153. Residues tyrosine 154–alanine 164 lie on the Cytoplasmic side of the membrane. Residues isoleucine 165–phenylalanine 185 form a helical membrane-spanning segment. The Extracellular portion of the chain corresponds to threonine 186 to arginine 198. A helical membrane pass occupies residues tryptophan 199 to phenylalanine 219. At proline 220–arginine 271 the chain is on the cytoplasmic side. Residues tryptophan 272–serine 292 form a helical membrane-spanning segment. Residues asparagine 293 to asparagine 312 lie on the Extracellular side of the membrane. The helical transmembrane segment at tyrosine 313–serine 333 threads the bilayer. The Cytoplasmic segment spans residues lysine 334–histidine 342. A helical membrane pass occupies residues valine 343–leucine 363. Topologically, residues asparagine 364–glutamine 372 are extracellular. The chain crosses the membrane as a helical span at residues tyrosine 373–cysteine 393. Residues histidine 394–alanine 401 are Cytoplasmic-facing. A helical membrane pass occupies residues isoleucine 402–phenylalanine 422. Topologically, residues phenylalanine 423–glycine 434 are extracellular. A helical membrane pass occupies residues cysteine 435 to leucine 455. The Cytoplasmic segment spans residues glutamine 456–arginine 512. Residues tyrosine 468–arginine 512 are disordered. Positions proline 475–glutamate 496 are enriched in acidic residues.

The protein belongs to the major facilitator superfamily. Allantoate permease family.

Its subcellular location is the cell membrane. In terms of biological role, transports pantothenate into the cell. Also involved in the catabolite repression-mediated regulation of ergosterol biosynthesis and in fenpropimorph resistance. The chain is Pantothenate transporter FEN2 (FEN2) from Saccharomyces cerevisiae (strain ATCC 204508 / S288c) (Baker's yeast).